We begin with the raw amino-acid sequence, 222 residues long: Cytochrome b6 (222 aa).

A helical transmembrane segment spans residues Ile-39–Phe-59. Tyr-41 serves as a coordination point for heme b. Residue Cys-42 participates in heme c binding. Residues Arg-90, His-93, Arg-94, His-107, and Arg-110 each coordinate heme b. The next 3 membrane-spanning stretches (helical) occupy residues Ala-97–Phe-117, Leu-123–Tyr-143, and Leu-193–Ile-213. The heme b site is built by His-194 and His-209. The heme c site is built by Arg-214 and Ile-218. Ser-219 contributes to the heme b binding site.

It belongs to the cytochrome b family. PetB subfamily. In terms of assembly, the 4 large subunits of the cytochrome b6-f complex are cytochrome b6, subunit IV (17 kDa polypeptide, PetD), cytochrome f and the Rieske protein, while the 4 small subunits are PetG, PetL, PetM and PetN. The complex functions as a dimer. Requires heme b as cofactor. The cofactor is heme c.

It is found in the cellular thylakoid membrane. Component of the cytochrome b6-f complex, which mediates electron transfer between photosystem II (PSII) and photosystem I (PSI), cyclic electron flow around PSI, and state transitions. This is Cytochrome b6 from Synechocystis sp. (strain ATCC 27184 / PCC 6803 / Kazusa).